Consider the following 203-residue polypeptide: Hydra actinoporin-like toxin 2 (203 aa).

The N-terminal stretch at 1 to 21 is a signal peptide; it reads MLSYLCFGCFLVSASLEIACG. The Cell attachment site motif lies at 175–177; it reads RGG.

The protein belongs to the actinoporin family. HALT subfamily. Octamer or nonamer in membranes. Monomer in the soluble state. In vitro, interacts with folate receptor alpha (of target organism). As to expression, strongly expressed in the gland and mucous cells in the endoderm.

The protein localises to the nematocyst. Its subcellular location is the secreted. The protein resides in the target cell membrane. Functionally, pore-forming protein that forms hydrophilic pores and causes cytolysis. Compared to equinatoxin-2 (AC P61914), it reveals lower cytolysis activity (5-12-fold difference, tested on erythrocytes), a larger pore size (probably 2-3 nm) and different affinity to membrane lipids (100-fold lower affinity to sphingomyelin). Binds to sulfatides (SFT). Shows cytolytic activity on HeLa cells, with a different potency than its paralogs (from most potent to less potent: HALT-4&gt;HALT-6~HALT-1&gt;HALT-3&gt;HALT-7&gt;HALT-2). Pore formation is a multi-step process that involves specific recognition of membrane lipid by a protein aromatic residues rich region, firm binding to the membrane (mainly driven by hydrophobic interactions) accompanied by the transfer of the N-terminal region to the lipid-water interface and finally pore formation after oligomerization of monomers. In vitro, binds to the folate receptor alpha (FOLR1), a GPI-anchored membrane protein that plays a major role in the uptake of folate/folic acid into cells via endocytosis, suggesting a possible involvement of this receptor in the mechanism of HALT-1-induced cell lysis. In vivo, does not cause visible paralysis in larvae of the blowfly Sarcophaga faculata, the most common arthropod prey of Hydra. This chain is Hydra actinoporin-like toxin 2, found in Hydra vulgaris (Hydra).